A 338-amino-acid chain; its full sequence is Glyceraldehyde-3-phosphate dehydrogenase (338 aa).

Residues 11-12 (TI) and Gly109 each bind NAD(+). D-glyceraldehyde 3-phosphate is bound at residue 138–140 (SCN). Cys139 serves as the catalytic Nucleophile. An NAD(+)-binding site is contributed by Arg167. Residues Thr169 and 192–193 (HA) each bind D-glyceraldehyde 3-phosphate. Gln299 is an NAD(+) binding site.

Belongs to the glyceraldehyde-3-phosphate dehydrogenase family. In terms of assembly, homotetramer.

The protein localises to the cytoplasm. It catalyses the reaction D-glyceraldehyde 3-phosphate + phosphate + NADP(+) = (2R)-3-phospho-glyceroyl phosphate + NADPH + H(+). The catalysed reaction is D-glyceraldehyde 3-phosphate + phosphate + NAD(+) = (2R)-3-phospho-glyceroyl phosphate + NADH + H(+). Its pathway is carbohydrate degradation; glycolysis; pyruvate from D-glyceraldehyde 3-phosphate: step 1/5. This is Glyceraldehyde-3-phosphate dehydrogenase from Thermoplasma volcanium (strain ATCC 51530 / DSM 4299 / JCM 9571 / NBRC 15438 / GSS1).